Reading from the N-terminus, the 379-residue chain is Dual-specificity RNA methyltransferase RlmN (379 aa).

The Proton acceptor role is filled by Glu-95. One can recognise a Radical SAM core domain in the interval 101 to 345 (EETRGTLCVS…TTVRKTRGDD (245 aa)). Cysteines 108 and 350 form a disulfide. The [4Fe-4S] cluster site is built by Cys-115, Cys-119, and Cys-122. Residues 176–177 (GE), Ser-208, 230–232 (SLH), and Asn-307 each bind S-adenosyl-L-methionine. Cys-350 functions as the S-methylcysteine intermediate in the catalytic mechanism.

Belongs to the radical SAM superfamily. RlmN family. Requires [4Fe-4S] cluster as cofactor.

It localises to the cytoplasm. It catalyses the reaction adenosine(2503) in 23S rRNA + 2 reduced [2Fe-2S]-[ferredoxin] + 2 S-adenosyl-L-methionine = 2-methyladenosine(2503) in 23S rRNA + 5'-deoxyadenosine + L-methionine + 2 oxidized [2Fe-2S]-[ferredoxin] + S-adenosyl-L-homocysteine. The catalysed reaction is adenosine(37) in tRNA + 2 reduced [2Fe-2S]-[ferredoxin] + 2 S-adenosyl-L-methionine = 2-methyladenosine(37) in tRNA + 5'-deoxyadenosine + L-methionine + 2 oxidized [2Fe-2S]-[ferredoxin] + S-adenosyl-L-homocysteine. Its function is as follows. Specifically methylates position 2 of adenine 2503 in 23S rRNA and position 2 of adenine 37 in tRNAs. m2A2503 modification seems to play a crucial role in the proofreading step occurring at the peptidyl transferase center and thus would serve to optimize ribosomal fidelity. The chain is Dual-specificity RNA methyltransferase RlmN from Burkholderia cenocepacia (strain HI2424).